Reading from the N-terminus, the 142-residue chain is Lysozyme X (142 aa).

Residues 1–19 form the signal peptide; it reads MRALLGICVLALVTPAVLG. Residues 20-142 enclose the C-type lysozyme domain; that stretch reads RTMDRCSLAR…YLPPIDDCFV (123 aa). 4 disulfide bridges follow: Cys-25–Cys-140, Cys-46–Cys-130, Cys-81–Cys-97, and Cys-93–Cys-111. Active-site residues include Glu-51 and Asp-69.

This sequence belongs to the glycosyl hydrolase 22 family. As to expression, found in the midgut.

It catalyses the reaction Hydrolysis of (1-&gt;4)-beta-linkages between N-acetylmuramic acid and N-acetyl-D-glucosamine residues in a peptidoglycan and between N-acetyl-D-glucosamine residues in chitodextrins.. Functionally, unlikely to play an active role in the humoral immune defense. May have a function in the digestion of bacteria in the food. May be involved in the clearance of bacteria from the larval gut before metamorphosis. In Drosophila melanogaster (Fruit fly), this protein is Lysozyme X (LysX).